Reading from the N-terminus, the 145-residue chain is Putative BCoR-like protein 2 (145 aa).

Basic and acidic residues predominate over residues 1-27 (MKEKLSKKRAEVKGNRSWLEEFLKPSD). Residues 1–58 (MKEKLSKKRAEVKGNRSWLEEFLKPSDNEEGPPPKNKVLSNNASSQKPTHSSCIPLLR) are disordered. Over residues 38–52 (VLSNNASSQKPTHSS) the composition is skewed to polar residues.

It belongs to the BCOR family.

This chain is Putative BCoR-like protein 2 (BCORP1), found in Homo sapiens (Human).